A 162-amino-acid polypeptide reads, in one-letter code: FCS-Like Zinc finger 6 (162 aa).

Disordered stretches follow at residues 25–47 (NLPS…YGSN) and 121–162 (RQEQ…AAAV). The span at 27–47 (PSESEPSNQQKPTVASPYGSN) shows a compositional bias: polar residues. Residues 88–132 (HFLRSCALCERLLVPGRDIYMYRGDKAFCSSECRQEQMAQDERKE) form an FLZ-type zinc finger. The span at 147 to 162 (APARAKPGKGRAAAAV) shows a compositional bias: low complexity.

It belongs to the FLZ family. Interacts with KIN10 and KIN11 via its FLZ-type zinc finger domain. Early expressed in hypocotyl and cotyledon. Later expressed in old or senescing leaves and in pistil, pollen and filament of open flowers.

It localises to the nucleus. The protein localises to the cytoplasm. Its subcellular location is the endoplasmic reticulum. In terms of biological role, may act as an adapter to facilitate the interaction of SnRK1 complex with effector proteins, conferring tissue- and stimulus-type specific differences in the SnRK1 regulation pathway. Negatively regulates KIN10 leading to a repression of the SnRK1 signaling pathway. This Arabidopsis thaliana (Mouse-ear cress) protein is FCS-Like Zinc finger 6.